Here is a 238-residue protein sequence, read N- to C-terminus: Ribonuclease PH (238 aa).

Phosphate contacts are provided by residues Arg-86 and 124 to 126 (GTR).

Belongs to the RNase PH family. In terms of assembly, homohexameric ring arranged as a trimer of dimers.

The enzyme catalyses tRNA(n+1) + phosphate = tRNA(n) + a ribonucleoside 5'-diphosphate. In terms of biological role, phosphorolytic 3'-5' exoribonuclease that plays an important role in tRNA 3'-end maturation. Removes nucleotide residues following the 3'-CCA terminus of tRNAs; can also add nucleotides to the ends of RNA molecules by using nucleoside diphosphates as substrates, but this may not be physiologically important. Probably plays a role in initiation of 16S rRNA degradation (leading to ribosome degradation) during starvation. The polypeptide is Ribonuclease PH (Yersinia enterocolitica serotype O:8 / biotype 1B (strain NCTC 13174 / 8081)).